The sequence spans 90 residues: DNA-directed RNA polymerase subunit omega (90 aa).

The tract at residues 69–90 (RQEQQEQEAAELAAVSSIAHTR) is disordered.

It belongs to the RNA polymerase subunit omega family. The RNAP catalytic core consists of 2 alpha, 1 beta, 1 beta' and 1 omega subunit. When a sigma factor is associated with the core the holoenzyme is formed, which can initiate transcription.

It catalyses the reaction RNA(n) + a ribonucleoside 5'-triphosphate = RNA(n+1) + diphosphate. Its function is as follows. Promotes RNA polymerase assembly. Latches the N- and C-terminal regions of the beta' subunit thereby facilitating its interaction with the beta and alpha subunits. The chain is DNA-directed RNA polymerase subunit omega from Vibrio atlanticus (strain LGP32) (Vibrio splendidus (strain Mel32)).